The chain runs to 185 residues: Elongation factor P (185 aa).

It belongs to the elongation factor P family.

Its subcellular location is the cytoplasm. The protein operates within protein biosynthesis; polypeptide chain elongation. In terms of biological role, involved in peptide bond synthesis. Stimulates efficient translation and peptide-bond synthesis on native or reconstituted 70S ribosomes in vitro. Probably functions indirectly by altering the affinity of the ribosome for aminoacyl-tRNA, thus increasing their reactivity as acceptors for peptidyl transferase. The polypeptide is Elongation factor P (Caldicellulosiruptor saccharolyticus (strain ATCC 43494 / DSM 8903 / Tp8T 6331)).